We begin with the raw amino-acid sequence, 418 residues long: Glutamyl-tRNA reductase (418 aa).

Residues 49 to 52 (TCNR), Ser-109, 114 to 116 (EPQ), and Gln-120 contribute to the substrate site. The Nucleophile role is filled by Cys-50. 189-194 (GAGETI) contacts NADP(+).

This sequence belongs to the glutamyl-tRNA reductase family. As to quaternary structure, homodimer.

The catalysed reaction is (S)-4-amino-5-oxopentanoate + tRNA(Glu) + NADP(+) = L-glutamyl-tRNA(Glu) + NADPH + H(+). It functions in the pathway porphyrin-containing compound metabolism; protoporphyrin-IX biosynthesis; 5-aminolevulinate from L-glutamyl-tRNA(Glu): step 1/2. In terms of biological role, catalyzes the NADPH-dependent reduction of glutamyl-tRNA(Glu) to glutamate 1-semialdehyde (GSA). The protein is Glutamyl-tRNA reductase of Escherichia fergusonii (strain ATCC 35469 / DSM 13698 / CCUG 18766 / IAM 14443 / JCM 21226 / LMG 7866 / NBRC 102419 / NCTC 12128 / CDC 0568-73).